The following is a 372-amino-acid chain: Cyclin-dependent kinase 9 (372 aa).

The 297-residue stretch at 19-315 (YEKLAKIGQG…SDDALNHDFF (297 aa)) folds into the Protein kinase domain. An ATP-binding site is contributed by 25–33 (IGQGTFGEV). Residue lysine 35 is modified to Phosphoserine. Lysine 44 carries the post-translational modification N6-acetyllysine; by EP300/CBP, PCAF/KAT2B and GCN5/KAT2A. Lysine 48 is an ATP binding site. Residue lysine 48 is modified to N6-acetyllysine; by PCAF/KAT2B and GCN5/KAT2A. Phosphothreonine is present on asparagine 54. Residue 104-106 (DFC) participates in ATP binding. The active-site Proton acceptor is aspartate 149. A T-loop region spans residues 166 to 191 (ADFGLARAFSLAKNSQPNRYTNRVVT). Aspartate 167 contacts ATP. At serine 175 the chain carries Phosphoserine. A Phosphothreonine; by CaMK1D modification is found at threonine 186. A disordered region spans residues 343–372 (RRKGSQITQQSTNQSRNPATTNQTEFERVF). Serine 347 carries the post-translational modification Phosphoserine; by CDK9 and PKA. Residues 347-366 (SQITQQSTNQSRNPATTNQT) are compositionally biased toward polar residues. Threonine 350 is modified (phosphothreonine; by CDK9). Position 353 is a phosphoserine; by CDK9 (serine 353). The residue at position 354 (threonine 354) is a Phosphothreonine; by CDK9. Position 357 is a phosphoserine; by CDK9 (serine 357). A phosphothreonine; by CDK9 mark is found at threonine 362 and threonine 363.

Belongs to the protein kinase superfamily. CMGC Ser/Thr protein kinase family. CDC2/CDKX subfamily. Component of the super elongation complex (SEC), at least composed of EAF1, EAF2, CDK9, MLLT3/AF9, AFF (AFF1 or AFF4), the P-TEFb complex and ELL (ELL, ELL2 or ELL3). Associates with CCNT1/cyclin-T1, CCNT2/cyclin-T2 (isoform A and isoform B) or CCNK/cyclin-K to form active P-TEFb. P-TEFb forms a complex with AFF4/AF5Q31 and is part of the super elongation complex (SEC). Component of a complex which is composed of at least 5 members: HTATSF1/Tat-SF1, P-TEFb complex, RNA pol II, SUPT5H and NCL/nucleolin. Associates with UBR5 and forms a transcription regulatory complex composed of CDK9, RNAP II, UBR5 and TFIIS/TCEA1 that can stimulate target gene transcription (e.g. gamma fibrinogen/FGG) by recruiting their promoters. Component of the 7SK snRNP inactive complex which is composed of at least 8 members: P-TEFb (composed of CDK9 and CCNT1/cyclin-T1), HEXIM1, HEXIM2, LARP7, BCDIN3, SART3 proteins and 7SK and U6 snRNAs. This inactive 7SK snRNP complex can also interact with NCOR1 and HDAC3, probably to regulate CDK9 acetylation. Release of P-TEFb from P-TEFb/7SK snRNP complex requires both PP2B to transduce calcium Ca(2+) signaling in response to stimuli (e.g. UV or hexamethylene bisacetamide (HMBA)) and PPP1CA to dephosphorylate Thr-186. This released P-TEFb remains inactive in the pre-initiation complex with BRD4 until new Thr-186 phosphorylation occurs after the synthesis of a short RNA. Interacts with BRD4; to target chromatin binding. Interacts with JMJD6. Interacts with activated nuclear STAT3 and RELA/p65. Binds to AR and MYOD1. Forms a complex composed of CDK9, CCNT1/cyclin-T1, EP300 and GATA4 that stimulates hypertrophy in cardiomyocytes. The large PER complex involved in the repression of transcriptional termination is composed of at least PER2, CDK9, DDX5, DHX9, NCBP1 and POLR2A. Interacts with HSF1. Interacts with TBX21. Isoform 3: binds to KU70/XRCC6. Interacts with WDR43. Interacts with ZMYND8; the association appears to occur between homodimeric ZMYND8 and the activated form of the P-TEFb complex. In terms of assembly, (Microbial infection) Interacts with the acidic/proline-rich region of HIV-1 and HIV-2 Tat via T-loop region and is thus required for HIV to hijack host transcription machinery during its replication through cooperative binding to viral TAR RNA. As to quaternary structure, (Microbial infection) Interacts with human herpes virus 1 (HHV-1) protein ICP22; this interaction blocks the recruitment of positive transcription elongation factor b (P-TEFb) to the viral promoter. In terms of processing, autophosphorylation at Thr-186, Ser-347, Thr-350, Ser-353, Thr-354 and Ser-357 triggers kinase activity by promoting cyclin and substrate binding (e.g. HIV TAT) upon conformational changes. Thr-186 phosphorylation requires the calcium Ca(2+) signaling pathway, including CaMK1D and calmodulin. This inhibition is relieved by Thr-29 dephosphorylation. However, phosphorylation at Thr-29 is inhibitory within the HIV transcription initiation complex. Phosphorylation at Ser-175 inhibits kinase activity. Can be phosphorylated on either Thr-362 or Thr-363 but not on both simultaneously. Post-translationally, dephosphorylation of Thr-186 by PPM1A and PPM1B blocks CDK9 activity and may lead to CDK9 proteasomal degradation. However, PPP1CA-mediated Thr-186 dephosphorylation is required to release P-TEFb from its inactive P-TEFb/7SK snRNP complex. Dephosphorylated at Ser-347 by the PNUTS-PP1 complex during RNA polymerase II transcription pause-release. Dephosphorylation of C-terminus Thr and Ser residues by protein phosphatase-1 (PP1) triggers CDK9 activity, contributing to the activation of HIV-1 transcription. N6-acetylation of Lys-44 promotes kinase activity, whereas acetylation of both Lys-44 and Lys-48 mediated by PCAF/KAT2B and GCN5/KAT2A reduces kinase activity. The acetylated form associates with PML bodies in the nuclear matrix and with the transcriptionally silent HIV-1 genome; deacetylated upon transcription stimulation. Deacetylated by SIRT7, promoting the kinase activity and subsequent 'Ser-2' phosphorylation of the C-terminal domain (CTD) of RNA polymerase II. In terms of processing, polyubiquitinated and thus activated by UBR5. This ubiquitination is promoted by TFIIS/TCEA1 and favors 'Ser-2' phosphorylation of RPB1/POLR2A CTD. As to expression, ubiquitous.

The protein resides in the nucleus. The protein localises to the cytoplasm. It localises to the PML body. The enzyme catalyses L-seryl-[protein] + ATP = O-phospho-L-seryl-[protein] + ADP + H(+). It carries out the reaction L-threonyl-[protein] + ATP = O-phospho-L-threonyl-[protein] + ADP + H(+). It catalyses the reaction [DNA-directed RNA polymerase] + ATP = phospho-[DNA-directed RNA polymerase] + ADP + H(+). With respect to regulation, inhibited by CDKI-71, CR8, GPC-286199, AG-024322, flavopiridol (alvocidib), RBG-286147, anilinopyrimidine 32, arylazopyrazole 31b, indirubin 3'-monoxime, meriolin 3,P276-00, olomoucine II, pyrazolotriazine, meriolin, variolin, thiazolyl-pyrimidine, thiazolyl-pyrimidine, indirubin-30-monoxime, ZK 304709, AG-012986, AT7519, R547, RGB-286638, imidazole pyrimidine, EXEL-3700, EXEL-8647, 5,6-dichloro-1-b-ribofur-anosyl-benzimidazole (DRB), P276-00, roscovitine (seliciclib, CYC202) and SNS-032 (BMS-387032). Activation by Thr-186 phosphorylation is calcium Ca(2+) signaling pathway-dependent; actively inactivated by dephosphorylation mediated by PPP1CA, PPM1A and PPM1B. Reversibly repressed by acetylation at Lys-44 and Lys-48. Functionally, protein kinase involved in the regulation of transcription. Member of the cyclin-dependent kinase pair (CDK9/cyclin-T) complex, also called positive transcription elongation factor b (P-TEFb), which facilitates the transition from abortive to productive elongation by phosphorylating the CTD (C-terminal domain) of the large subunit of RNA polymerase II (RNAP II) POLR2A, SUPT5H and RDBP. This complex is inactive when in the 7SK snRNP complex form. Phosphorylates EP300, MYOD1, RPB1/POLR2A and AR and the negative elongation factors DSIF and NELFE. Regulates cytokine inducible transcription networks by facilitating promoter recognition of target transcription factors (e.g. TNF-inducible RELA/p65 activation and IL-6-inducible STAT3 signaling). Promotes RNA synthesis in genetic programs for cell growth, differentiation and viral pathogenesis. P-TEFb is also involved in cotranscriptional histone modification, mRNA processing and mRNA export. Modulates a complex network of chromatin modifications including histone H2B monoubiquitination (H2Bub1), H3 lysine 4 trimethylation (H3K4me3) and H3K36me3; integrates phosphorylation during transcription with chromatin modifications to control co-transcriptional histone mRNA processing. The CDK9/cyclin-K complex has also a kinase activity towards CTD of RNAP II and can substitute for CDK9/cyclin-T P-TEFb in vitro. Replication stress response protein; the CDK9/cyclin-K complex is required for genome integrity maintenance, by promoting cell cycle recovery from replication arrest and limiting single-stranded DNA amount in response to replication stress, thus reducing the breakdown of stalled replication forks and avoiding DNA damage. In addition, probable function in DNA repair of isoform 2 via interaction with KU70/XRCC6. Promotes cardiac myocyte enlargement. RPB1/POLR2A phosphorylation on 'Ser-2' in CTD activates transcription. AR phosphorylation modulates AR transcription factor promoter selectivity and cell growth. DSIF and NELF phosphorylation promotes transcription by inhibiting their negative effect. The phosphorylation of MYOD1 enhances its transcriptional activity and thus promotes muscle differentiation. Catalyzes phosphorylation of KAT5, promoting KAT5 recruitment to chromatin and histone acetyltransferase activity. This is Cyclin-dependent kinase 9 from Homo sapiens (Human).